The sequence spans 257 residues: Probable pectate lyase E (257 aa).

Positions 1 to 17 (MYQKLLLVPLLLTSALA) are cleaved as a signal peptide.

This sequence belongs to the polysaccharide lyase 3 family. Requires Ca(2+) as cofactor.

It localises to the secreted. The catalysed reaction is Eliminative cleavage of (1-&gt;4)-alpha-D-galacturonan to give oligosaccharides with 4-deoxy-alpha-D-galact-4-enuronosyl groups at their non-reducing ends.. Pectinolytic enzyme consist of four classes of enzymes: pectin lyase, polygalacturonase, pectin methylesterase and rhamnogalacturonase. Among pectinolytic enzymes, pectin lyase is the most important in depolymerization of pectin, since it cleaves internal glycosidic bonds of highly methylated pectins. Favors pectate, the anion, over pectin, the methyl ester. The polypeptide is Probable pectate lyase E (plyE) (Aspergillus flavus (strain ATCC 200026 / FGSC A1120 / IAM 13836 / NRRL 3357 / JCM 12722 / SRRC 167)).